Here is a 310-residue protein sequence, read N- to C-terminus: Phosphoribosylaminoimidazole-succinocarboxamide synthase (310 aa).

Belongs to the SAICAR synthetase family.

The enzyme catalyses 5-amino-1-(5-phospho-D-ribosyl)imidazole-4-carboxylate + L-aspartate + ATP = (2S)-2-[5-amino-1-(5-phospho-beta-D-ribosyl)imidazole-4-carboxamido]succinate + ADP + phosphate + 2 H(+). It functions in the pathway purine metabolism; IMP biosynthesis via de novo pathway; 5-amino-1-(5-phospho-D-ribosyl)imidazole-4-carboxamide from 5-amino-1-(5-phospho-D-ribosyl)imidazole-4-carboxylate: step 1/2. The polypeptide is Phosphoribosylaminoimidazole-succinocarboxamide synthase (Cytophaga hutchinsonii (strain ATCC 33406 / DSM 1761 / CIP 103989 / NBRC 15051 / NCIMB 9469 / D465)).